We begin with the raw amino-acid sequence, 337 residues long: Adenosine deaminase (337 aa).

Zn(2+)-binding residues include His-12 and His-14. Residues His-14, Asp-16, and Gly-170 each coordinate substrate. His-197 provides a ligand contact to Zn(2+). Glu-200 serves as the catalytic Proton donor. Asp-278 lines the Zn(2+) pocket. Asp-279 contacts substrate.

Belongs to the metallo-dependent hydrolases superfamily. Adenosine and AMP deaminases family. Adenosine deaminase subfamily. The cofactor is Zn(2+).

It catalyses the reaction adenosine + H2O + H(+) = inosine + NH4(+). It carries out the reaction 2'-deoxyadenosine + H2O + H(+) = 2'-deoxyinosine + NH4(+). In terms of biological role, catalyzes the hydrolytic deamination of adenosine and 2-deoxyadenosine. The sequence is that of Adenosine deaminase from Pectobacterium atrosepticum (strain SCRI 1043 / ATCC BAA-672) (Erwinia carotovora subsp. atroseptica).